The chain runs to 185 residues: MAEERRRDDGGDVEVELSLRLRTGDDSTSADPAPATVAAEARRNLTIFYNGRMCAVNVTELQARTIISMASQGNFGKQQQQQIQGRDDHHYHQGESSSGGGVSTAAARHCDVAGSSSSHSGSGSGSATPPRPALVSPRAGLQAAAAAAPTMNQPPAASGLSMKRSLQRFLEKRKTRAAAPLYARR.

The Tify domain occupies 38–72 (AAEARRNLTIFYNGRMCAVNVTELQARTIISMASQ). The interval 77–185 (KQQQQQIQGR…RAAAPLYARR (109 aa)) is disordered. The segment covering 137 to 157 (PRAGLQAAAAAAPTMNQPPAA) has biased composition (low complexity). Residues 155-182 (PAASGLSMKRSLQRFLEKRKTRAAAPLY) carry the Jas motif. A Nuclear localization signal motif is present at residues 162-169 (MKRSLQRF).

It belongs to the TIFY/JAZ family. Post-translationally, ubiquitinated. Targeted for degradation by the SCF(COI1) E3 ubiquitin ligase-proteasome pathway during jasmonate signaling.

The protein localises to the nucleus. In terms of biological role, repressor of jasmonate responses. The sequence is that of Protein TIFY 5 from Oryza sativa subsp. indica (Rice).